Reading from the N-terminus, the 188-residue chain is Archaemetzincin (188 aa).

His137 contributes to the Zn(2+) binding site. The active-site Proton acceptor is Glu138. Zn(2+) is bound by residues His141, His147, Cys148, Cys153, Cys172, and Cys175.

The protein belongs to the peptidase M54 family. Monomer. It depends on Zn(2+) as a cofactor.

Its function is as follows. Probable zinc metalloprotease whose natural substrate is unknown. This Pyrococcus abyssi (strain GE5 / Orsay) protein is Archaemetzincin.